A 389-amino-acid chain; its full sequence is GTPase Obg (389 aa).

The Obg domain occupies 1–159; that stretch reads MKFVDEAVIK…RELRLELLLL (159 aa). Positions 160-333 constitute an OBG-type G domain; the sequence is ADVGMLGLPN…LCYKLADFME (174 aa). GTP is bound by residues 166 to 173, 191 to 195, 213 to 216, 283 to 286, and 314 to 316; these read GLPNAGKS, FTTLI, DIPG, NKVD, and SAV. Serine 173 and threonine 193 together coordinate Mg(2+). The segment at 359 to 389 is disordered; sequence NQGEVITEDDDDDWDDWDDEEDDGHVIYVRE. Residues 364 to 381 show a composition bias toward acidic residues; sequence ITEDDDDDWDDWDDEEDD.

It belongs to the TRAFAC class OBG-HflX-like GTPase superfamily. OBG GTPase family. As to quaternary structure, monomer. Mg(2+) serves as cofactor.

It localises to the cytoplasm. Its function is as follows. An essential GTPase which binds GTP, GDP and possibly (p)ppGpp with moderate affinity, with high nucleotide exchange rates and a fairly low GTP hydrolysis rate. Plays a role in control of the cell cycle, stress response, ribosome biogenesis and in those bacteria that undergo differentiation, in morphogenesis control. This Vibrio vulnificus (strain CMCP6) protein is GTPase Obg.